The following is a 557-amino-acid chain: Copine-7 (557 aa).

2 consecutive C2 domains span residues 1 to 128 and 135 to 263; these read MSGD…TRPL and NAGK…AQWD. Ca(2+) is bound by residues Asp168, Asp174, Asp230, Asp232, and Asp238. Residues 306-505 form the VWFA domain; that stretch reads HCTVAIDFTA…PALRDIVQFV (200 aa).

This sequence belongs to the copine family. Ca(2+) is required as a cofactor.

Its subcellular location is the cytoplasm. The protein localises to the nucleus. The protein resides in the cell membrane. Its function is as follows. Calcium-dependent phospholipid-binding protein that may play a role in calcium-mediated intracellular processes. The protein is Copine-7 of Mus musculus (Mouse).